The sequence spans 479 residues: UDP-N-acetylmuramate--L-alanine ligase (479 aa).

An ATP-binding site is contributed by 128-134 (GAHGKTT).

It belongs to the MurCDEF family.

It is found in the cytoplasm. It carries out the reaction UDP-N-acetyl-alpha-D-muramate + L-alanine + ATP = UDP-N-acetyl-alpha-D-muramoyl-L-alanine + ADP + phosphate + H(+). It participates in cell wall biogenesis; peptidoglycan biosynthesis. Cell wall formation. The sequence is that of UDP-N-acetylmuramate--L-alanine ligase from Psychrobacter cryohalolentis (strain ATCC BAA-1226 / DSM 17306 / VKM B-2378 / K5).